We begin with the raw amino-acid sequence, 1175 residues long: Chromosome partition protein Smc (1175 aa).

32-39 (PNGCGKSN) provides a ligand contact to ATP. Residues 170–504 (VSKYKERRRE…ALKALQEKVK (335 aa)) are a coiled coil. An SMC hinge domain is found at 524 to 625 (LWSRIAIEPG…YTAPTLEEAL (102 aa)). Coiled-coil stretches lie at residues 684 to 918 (DESR…FQLK) and 944 to 1022 (SQSI…ELLS). The disordered stretch occupies residues 807 to 849 (RQAQEATFSRRSLEARRGELSRTIETASQQARSLADEQQRAQD). Positions 817-828 (RSLEARRGELSR) are enriched in basic and acidic residues. A compositionally biased stretch (polar residues) spans 829-838 (TIETASQQAR). The segment covering 840-849 (LADEQQRAQD) has biased composition (basic and acidic residues).

This sequence belongs to the SMC family. Homodimer.

It is found in the cytoplasm. Functionally, required for chromosome condensation and partitioning. The polypeptide is Chromosome partition protein Smc (Delftia acidovorans (strain DSM 14801 / SPH-1)).